Here is an 88-residue protein sequence, read N- to C-terminus: Small ribosomal subunit protein bS16c (88 aa).

It belongs to the bacterial ribosomal protein bS16 family.

Its subcellular location is the plastid. It is found in the chloroplast. In Solanum bulbocastanum (Wild potato), this protein is Small ribosomal subunit protein bS16c.